We begin with the raw amino-acid sequence, 349 residues long: Fe(3+) ions import ATP-binding protein FbpC (349 aa).

The ABC transporter domain occupies 4–236 (LDFNKIGKSY…PIDEPTATFL (233 aa)). 36-43 (GPSGSGKT) is a binding site for ATP.

The protein belongs to the ABC transporter superfamily. Fe(3+) ion importer (TC 3.A.1.10) family. The complex is composed of two ATP-binding proteins (FbpC), two transmembrane proteins (FbpB) and a solute-binding protein (FbpA).

The protein localises to the cell inner membrane. It catalyses the reaction Fe(3+)(out) + ATP + H2O = Fe(3+)(in) + ADP + phosphate + H(+). Its function is as follows. Part of the ABC transporter complex FbpABC involved in Fe(3+) ions import. Responsible for energy coupling to the transport system. The sequence is that of Fe(3+) ions import ATP-binding protein FbpC from Yersinia enterocolitica.